The primary structure comprises 140 residues: Cysteine desulfuration protein SufE (140 aa).

C51 (cysteine persulfide intermediate) is an active-site residue.

It belongs to the SufE family. As to quaternary structure, homodimer. Interacts with SufS.

It localises to the cytoplasm. It participates in cofactor biosynthesis; iron-sulfur cluster biosynthesis. Functionally, participates in cysteine desulfuration mediated by SufS. Cysteine desulfuration mobilizes sulfur from L-cysteine to yield L-alanine and constitutes an essential step in sulfur metabolism for biosynthesis of a variety of sulfur-containing biomolecules. Functions as a sulfur acceptor for SufS, by mediating the direct transfer of the sulfur atom from the S-sulfanylcysteine of SufS, an intermediate product of cysteine desulfuration process. In Yersinia pseudotuberculosis serotype O:1b (strain IP 31758), this protein is Cysteine desulfuration protein SufE.